A 439-amino-acid chain; its full sequence is Glutamate-1-semialdehyde 2,1-aminomutase (439 aa).

At Lys279 the chain carries N6-(pyridoxal phosphate)lysine.

It belongs to the class-III pyridoxal-phosphate-dependent aminotransferase family. HemL subfamily. Homodimer. Pyridoxal 5'-phosphate is required as a cofactor.

It is found in the cytoplasm. The catalysed reaction is (S)-4-amino-5-oxopentanoate = 5-aminolevulinate. It functions in the pathway porphyrin-containing compound metabolism; protoporphyrin-IX biosynthesis; 5-aminolevulinate from L-glutamyl-tRNA(Glu): step 2/2. This Rhodopirellula baltica (strain DSM 10527 / NCIMB 13988 / SH1) protein is Glutamate-1-semialdehyde 2,1-aminomutase.